A 39-amino-acid polypeptide reads, in one-letter code: Cytochrome b6-f complex subunit 5 (39 aa).

A helical transmembrane segment spans residues 5-25 (LLCGIVLGLVPITLLGLFVAA).

Belongs to the PetG family. The 4 large subunits of the cytochrome b6-f complex are cytochrome b6, subunit IV (17 kDa polypeptide, PetD), cytochrome f and the Rieske protein, while the 4 small subunits are PetG, PetL, PetM and PetN. The complex functions as a dimer.

It is found in the cellular thylakoid membrane. Functionally, component of the cytochrome b6-f complex, which mediates electron transfer between photosystem II (PSII) and photosystem I (PSI), cyclic electron flow around PSI, and state transitions. PetG is required for either the stability or assembly of the cytochrome b6-f complex. The sequence is that of Cytochrome b6-f complex subunit 5 from Prochlorococcus marinus (strain SARG / CCMP1375 / SS120).